The sequence spans 452 residues: 51.5 kDa protein (452 aa).

Positions 1–126 (MIQSPPGSGK…KDTYDYMIEG (126 aa)) constitute a Helicase ATP-binding domain. Residues 177–333 (DVVQEYVKHA…NIVQAKQCPD (157 aa)) enclose the Helicase C-terminal domain. The segment at 331–348 (CPDCSAMWPLSQKMCNLC) is a zinc-finger region.

Its function is as follows. May play a role in either regulating bacteriophages replication or specifying expression of its own genes. The polypeptide is 51.5 kDa protein (Lactococcus (lactic streptococci)).